The primary structure comprises 187 residues: LSM complex subunit LSM4 (187 aa).

The region spanning 2–85 (LPLYLLTNAK…IKFIKLQDNI (84 aa)) is the Sm domain. The disordered stretch occupies residues 93–187 (INSNNNSNSN…NSSSPQKVEF (95 aa)). A compositionally biased stretch (low complexity) spans 112–167 (NRDSNNNRGNYNRRNNNNGNSNRRPYSQNRQYNNSNSSNINNSINSINSNNQNMNN). Residue Arg119 is modified to Omega-N-methylarginine. The span at 175-187 (HHFNSSSPQKVEF) shows a compositional bias: polar residues. The residue at position 181 (Ser181) is a Phosphoserine.

Belongs to the snRNP Sm proteins family. Component of the heptameric LSM1-LSM7 complex that forms a seven-membered ring structure with a donut shape. The LSm subunits are arranged in the order LSM1, LSM2, LSM3, LSM6, LSM5, LSM7 and LSM4. Except for LSM1, where a C-terminal helix crosses the ring structure to form additional interactions with LSM3 and LSM6, each subunit interacts only with its two neighboring subunits. The LSM1-LSM7 complex interacts with PAT1; within the complex PAT1 has direct interactions with LSM2 and LSM3. The LSM1-LSM7 complex interacts with XRN1. Component of the heptameric LSM2-LSM8 complex that forms a seven-membered ring structure with a donut shape; an RNA strand can pass through the hole in the center of the ring structure. The LSm subunits are arranged in the order LSM8, LSM2, LSM3, LSM6, LSM5, LSM7 and LSM4. Component of the spliceosome U4/U6-U5 tri-snRNP complex composed of the U4, U6 and U5 snRNAs and at least PRP3, PRP4, PRP6, PRP8, PRP18, PRP31, PRP38, SNU13, SNU23, SNU66, SNU114, SPP381, SMB1, SMD1, SMD2, SMD3, SMX2, SMX3, LSM2, LSM3, LSM4, LSM5, LSM6, LSM7, LSM8, BRR2 and DIB1. May be found in a complex comprising LSM2-LSM7 without LSM1 or LSM8; the complex associates with pre-P RNA and snoRNA SNR5.

It is found in the nucleus. Its subcellular location is the cytoplasm. In terms of biological role, component of LSm protein complexes, which are involved in RNA processing and may function in a chaperone-like manner. Component of the cytoplasmic LSM1-LSM7 complex which is involved in mRNA degradation by activating the decapping step. Together with PAT1, the LSM1-LSM7 complex binds to osmotic stress-activated mRNAs to attenuate the osmotic stress response, probably by limiting ribosome access to the mRNA and consequently translation. Component of the nuclear LSM2-LSM8 complex, which is involved in spliceosome assembly. The LSM2-LSM8 complex plays a role in the biogenesis of the spliceosomal U4/U6-U5 tri-snRNP complex by accelerating PRP24-mediated annealing of U4/U6 di-snRNA. The LSM2-LSM8 complex binds U6 snRNA terminating with a non-cyclic 3' phosphate group. LSM2-LSM8 is probably also involved in degradation of nuclear pre-mRNA by targeting them for decapping. LSM2-LSM8 could be involved in processing of pre-tRNAs, pre-rRNAs and U3 snoRNA, although involvement may be indirect. In a complex that probably contains LSM2-LSM7, but not LSM1 or LSM8, associates with the precursor of the RNA component of RNase P (pre-P RNA) and may be involved in maturing pre-P RNA; the complex also associates with snoRNA SNR5. The chain is LSM complex subunit LSM4 from Saccharomyces cerevisiae (strain ATCC 204508 / S288c) (Baker's yeast).